Consider the following 180-residue polypeptide: Small ribosomal subunit protein bS18 (180 aa).

Disordered stretches follow at residues M1 to V26 and Y53 to S82.

Belongs to the bacterial ribosomal protein bS18 family. As to quaternary structure, part of the 30S ribosomal subunit. Forms a tight heterodimer with protein bS6.

Binds as a heterodimer with protein bS6 to the central domain of the 16S rRNA, where it helps stabilize the platform of the 30S subunit. The protein is Small ribosomal subunit protein bS18 of Karelsulcia muelleri (strain GWSS) (Sulcia muelleri).